The chain runs to 336 residues: Transmembrane protein 120A (336 aa).

The Cytoplasmic segment spans residues 1–131 (MNSPALQDCV…KQSKFAYKDE (131 aa)). Lys-129 lines the CoA pocket. The helical transmembrane segment at 132–151 (YEKFKLYLTMILMVLSFICR) threads the bilayer. Topologically, residues 152 to 157 (FVLNSR) are extracellular. Residues 158-176 (VTDAVFNFLLVWYYCTLTI) traverse the membrane as a helical segment. Over 177 to 189 (RESILINNGSRIK) the chain is Cytoplasmic. Positions 186 and 187 each coordinate CoA. A helical membrane pass occupies residues 190–208 (GWWVLNHYISTFLSGVMLT). Over 209–217 (WPDGLMYQM) the chain is Extracellular. Residues 218–239 (FRNQFLSFSMYQSFVQFLQYYY) traverse the membrane as a helical segment. The CoA site is built by Gln-236, Tyr-239, and Gln-240. Residues 240–269 (QSGCLYRLRALGERHNMDLTVEGFQSWMWR) are Cytoplasmic-facing. The helical transmembrane segment at 270 to 293 (GLTFLLPFLFFGQFWQLYNAITLF) threads the bilayer. Residues 294 to 303 (KLARHPECKE) lie on the Extracellular side of the membrane. The helical transmembrane segment at 304-329 (WQVIMCGLPFLVHFLGNFFTTLRVVH) threads the bilayer. Over 330–336 (QKFQKQN) the chain is Cytoplasmic. Lys-331 is a CoA binding site.

This sequence belongs to the TMEM120 family. Homodimer.

The protein resides in the cell membrane. It is found in the nucleus inner membrane. The protein localises to the endoplasmic reticulum. Multifunctional protein involved in mechanosensation, and plays an essential role in lipid metabolism. May function as a potential ion channel involved in sensing mechanical stimuli. TMEM120A is structurally similar to a lipid-modifying enzyme, ELOVL7, and contains a bound coenzyme A molecule, which suggests it might function as an enzyme in lipid metabolism. This Xenopus tropicalis (Western clawed frog) protein is Transmembrane protein 120A.